The sequence spans 156 residues: Putative pre-16S rRNA nuclease (156 aa).

This sequence belongs to the YqgF nuclease family.

Its subcellular location is the cytoplasm. Its function is as follows. Could be a nuclease involved in processing of the 5'-end of pre-16S rRNA. This is Putative pre-16S rRNA nuclease from Streptomyces avermitilis (strain ATCC 31267 / DSM 46492 / JCM 5070 / NBRC 14893 / NCIMB 12804 / NRRL 8165 / MA-4680).